Here is a 375-residue protein sequence, read N- to C-terminus: Alcohol dehydrogenase 1 (375 aa).

S2 bears the N-acetylserine mark. Zn(2+)-binding residues include C47, H68, C98, C101, C104, C112, and C175. NAD(+)-binding positions include 200-205 (WSGRVG), D224, and K229. At K234 the chain carries N6-succinyllysine. Residue 293-295 (VGV) coordinates NAD(+). K340 carries the post-translational modification N6-succinyllysine. R370 contacts NAD(+).

The protein belongs to the zinc-containing alcohol dehydrogenase family. Class-I subfamily. As to quaternary structure, homodimer. Zn(2+) serves as cofactor.

It localises to the cytoplasm. The enzyme catalyses a primary alcohol + NAD(+) = an aldehyde + NADH + H(+). It carries out the reaction a secondary alcohol + NAD(+) = a ketone + NADH + H(+). The chain is Alcohol dehydrogenase 1 (ADH1) from Geomys knoxjonesi (Jones' pocket gopher).